Reading from the N-terminus, the 489-residue chain is FK506-binding protein 4 (489 aa).

Disordered regions lie at residues 40–157 (PDET…GLEL) and 199–378 (GNYV…TTGT). Over residues 66-88 (MDIDESDDDYEEDSEEDSDDEEI) the composition is skewed to acidic residues. Residues 93–109 (SDKEKARKLKEAAALKE) show a composition bias toward basic and acidic residues. Composition is skewed to acidic residues over residues 110–125 (LEDE…DDEN), 143–157 (TDDD…GLEL), and 208–250 (GPSE…DELD). 3 stretches are compositionally biased toward basic and acidic residues: residues 267–282 (APKL…RTAD), 292–303 (MMAKDGKAKGAD), and 328–353 (EQKK…EAKK). The span at 362 to 378 (QGPTPSGQKPGETTTGT) shows a compositional bias: polar residues. The PPIase FKBP-type domain maps to 406 to 489 (VAMRYIGKLE…IFDVKLLEIK (84 aa)).

This sequence belongs to the FKBP-type PPIase family. FKBP3/4 subfamily. In terms of assembly, binds to histones H3 and H4.

The protein localises to the nucleus. It carries out the reaction [protein]-peptidylproline (omega=180) = [protein]-peptidylproline (omega=0). Its activity is regulated as follows. Inhibited by both FK506 and rapamycin. Its function is as follows. PPIase that acts as a histone chaperone. Histone proline isomerase that increases the rate of cis-trans isomerization at prolines on the histone H3 N-terminal tail. Proline isomerization influences H3 methylation thereby regulating gene expression. The sequence is that of FK506-binding protein 4 (fpr4) from Aspergillus fumigatus (strain ATCC MYA-4609 / CBS 101355 / FGSC A1100 / Af293) (Neosartorya fumigata).